The following is a 187-amino-acid chain: Photosystem I assembly protein Ycf4 (187 aa).

2 helical membrane-spanning segments follow: residues 25–47 and 62–84; these read YWWA…SSYL and FVPQ…IYLW.

This sequence belongs to the Ycf4 family.

The protein localises to the plastid. It localises to the chloroplast thylakoid membrane. Seems to be required for the assembly of the photosystem I complex. The polypeptide is Photosystem I assembly protein Ycf4 (Mesostigma viride (Green alga)).